A 256-amino-acid chain; its full sequence is 5-oxoprolinase subunit A 3 (256 aa).

This sequence belongs to the LamB/PxpA family. Forms a complex composed of PxpA, PxpB and PxpC.

It carries out the reaction 5-oxo-L-proline + ATP + 2 H2O = L-glutamate + ADP + phosphate + H(+). Catalyzes the cleavage of 5-oxoproline to form L-glutamate coupled to the hydrolysis of ATP to ADP and inorganic phosphate. This Pseudomonas syringae pv. tomato (strain ATCC BAA-871 / DC3000) protein is 5-oxoprolinase subunit A 3.